A 56-amino-acid polypeptide reads, in one-letter code: Large ribosomal subunit protein bL32 (56 aa).

Residues 1-16 (MAVQKSKKSRSRRGMR) are compositionally biased toward basic residues. A disordered region spans residues 1 to 38 (MAVQKSKKSRSRRGMRRSHDAVTPENLSVDPVSGETHR).

This sequence belongs to the bacterial ribosomal protein bL32 family.

The polypeptide is Large ribosomal subunit protein bL32 (Colwellia psychrerythraea (strain 34H / ATCC BAA-681) (Vibrio psychroerythus)).